A 152-amino-acid polypeptide reads, in one-letter code: Anti-CBASS protein Acb1 (152 aa).

Tyr12 serves as a coordination point for 3',3'-cGAMP. Position 12 (Tyr12) interacts with 3',3'-cUAMP. Catalysis depends on residues His44, Thr46, His113, and Thr115. 3',3'-cGAMP-binding residues include Glu141 and Trp147. 3',3'-cUAMP is bound by residues Glu141 and Trp147.

Belongs to the anti-CBASS protein Acb1 family.

It carries out the reaction 3',3'-cUAMP + H2O = U[3'-5']pAp[3'] + H(+). The enzyme catalyses 3',3',3'-c-tri-AMP + H2O = A[3'-5']pA[3'-5']pAp[3'] + H(+). It catalyses the reaction 3',3',3'-cAAG + H2O = G[3'-5']pA[3'-5']pAp[3'] + H(+). The catalysed reaction is 3',3',3'-cAAG + H2O = A[3'-5']pG[3'-5']pAp[3'] + H(+). It carries out the reaction 3',3'-cGAMP + H2O = G[3'-5']pAp[3'] + H(+). Its function is as follows. Counteracts the host CBASS antiviral defense system. Phosphodiesterase that enables metal-independent hydrolysis of the host cyclic di- and trinucleotide CBASS signals such as 3'3'-cGAMP, 3'3'cUA, and 3'3'3'-cAAA. Does not cleave cGG or cA4. Besides evasion of the CBASS system, might also enable evasion of the type III CRISPR systems that use cA3 signals. The polypeptide is Anti-CBASS protein Acb1 (Salmonella phage S16 (Salmonella phage vB_SenM-S16)).